The sequence spans 227 residues: 2,3-bisphosphoglycerate-dependent phosphoglycerate mutase (227 aa).

Residues 7–14, 20–21, arginine 59, 86–89, lysine 97, 113–114, and 182–183 each bind substrate; these read RHGFSEWN, TG, ERHY, RR, and GN. Histidine 8 serves as the catalytic Tele-phosphohistidine intermediate. The Proton donor/acceptor role is filled by glutamate 86.

The protein belongs to the phosphoglycerate mutase family. BPG-dependent PGAM subfamily. As to quaternary structure, homodimer.

The catalysed reaction is (2R)-2-phosphoglycerate = (2R)-3-phosphoglycerate. It participates in carbohydrate degradation; glycolysis; pyruvate from D-glyceraldehyde 3-phosphate: step 3/5. Catalyzes the interconversion of 2-phosphoglycerate and 3-phosphoglycerate. The polypeptide is 2,3-bisphosphoglycerate-dependent phosphoglycerate mutase (Histophilus somni (strain 129Pt) (Haemophilus somnus)).